Consider the following 634-residue polypeptide: Ras and EF-hand domain-containing protein homolog (634 aa).

EF-hand domains are found at residues 5–33 (DVEN…CPQL) and 33–68 (LDDN…TVQH). Positions 46, 48, 50, 52, and 57 each coordinate Ca(2+). The stretch at 169–310 (LSEKKHENER…RADFDQKQDE (142 aa)) forms a coiled coil. Disordered regions lie at residues 216–237 (ERER…EMSE) and 308–328 (QDEL…SESV). Residues 449–454 (AVGKSS), 552–555 (NKVD), and 585–586 (AL) contribute to the GTP site. The propeptide at 632–634 (RGS) is removed in mature form.

This sequence belongs to the small GTPase superfamily. Rab family. In terms of assembly, homodimer.

The protein resides in the cytoplasm. Its subcellular location is the perinuclear region. Functionally, binds GTP and GDP. Plays a role in uterine seam cell development. This Caenorhabditis briggsae protein is Ras and EF-hand domain-containing protein homolog.